Here is a 149-residue protein sequence, read N- to C-terminus: Transcriptional repressor NrdR (149 aa).

The segment at 3 to 34 (CPFCSTEETKVIDSRLVSDGYQVRRRRECTKC) is a zinc-finger region. The ATP-cone domain maps to 49 to 139 (PKIIKNNGMR…VYLSFENINE (91 aa)).

The protein belongs to the NrdR family. Requires Zn(2+) as cofactor.

Its function is as follows. Negatively regulates transcription of bacterial ribonucleotide reductase nrd genes and operons by binding to NrdR-boxes. In Mannheimia succiniciproducens (strain KCTC 0769BP / MBEL55E), this protein is Transcriptional repressor NrdR.